Reading from the N-terminus, the 130-residue chain is Small ribosomal subunit protein uS9 (130 aa).

The protein belongs to the universal ribosomal protein uS9 family.

This is Small ribosomal subunit protein uS9 from Tolumonas auensis (strain DSM 9187 / NBRC 110442 / TA 4).